A 332-amino-acid chain; its full sequence is Fructose-1,6-bisphosphatase class 1 (332 aa).

Residues Glu89, Asp110, Leu112, and Asp113 each contribute to the Mg(2+) site. Residues 113 to 116, Asn206, Tyr239, 257 to 259, and Lys269 contribute to the substrate site; these read DGSS and YLY. Glu275 serves as a coordination point for Mg(2+).

The protein belongs to the FBPase class 1 family. As to quaternary structure, homotetramer. It depends on Mg(2+) as a cofactor.

Its subcellular location is the cytoplasm. The catalysed reaction is beta-D-fructose 1,6-bisphosphate + H2O = beta-D-fructose 6-phosphate + phosphate. It functions in the pathway carbohydrate biosynthesis; gluconeogenesis. The chain is Fructose-1,6-bisphosphatase class 1 from Salmonella gallinarum (strain 287/91 / NCTC 13346).